Here is a 100-residue protein sequence, read N- to C-terminus: Small ribosomal subunit protein uS14 (100 aa).

Belongs to the universal ribosomal protein uS14 family. As to quaternary structure, part of the 30S ribosomal subunit. Contacts proteins S3 and S10.

In terms of biological role, binds 16S rRNA, required for the assembly of 30S particles and may also be responsible for determining the conformation of the 16S rRNA at the A site. In Prochlorococcus marinus (strain MIT 9211), this protein is Small ribosomal subunit protein uS14.